Consider the following 286-residue polypeptide: uncharacterized protein (286 aa).

NAD(+) contacts are provided by residues 4 to 18 (AVIGLGNMGQPIARN) and Thr95. Lys171 is an active-site residue. Lys239 provides a ligand contact to NAD(+).

Belongs to the HIBADH-related family.

This is an uncharacterized protein from Bacillus subtilis (strain 168).